A 456-amino-acid chain; its full sequence is Rap guanine nucleotide exchange factor-like 1 (456 aa).

One can recognise a Ras-GEF domain in the interval 218 to 454 (EPEDVANHLT…FELSYKLEAN (237 aa)).

Probable guanine nucleotide exchange factor (GEF). This Pongo pygmaeus (Bornean orangutan) protein is Rap guanine nucleotide exchange factor-like 1 (RAPGEFL1).